Consider the following 362-residue polypeptide: 3-isopropylmalate dehydrogenase (362 aa).

77–88 (GPKWGTGSVRPE) serves as a coordination point for NAD(+). Residues arginine 95, arginine 105, arginine 134, and aspartate 223 each contribute to the substrate site. Aspartate 223, aspartate 248, and aspartate 252 together coordinate Mg(2+). Residue 287–298 (GSAPDLPKGKVN) participates in NAD(+) binding.

This sequence belongs to the isocitrate and isopropylmalate dehydrogenases family. In terms of assembly, homodimer. The cofactor is Mg(2+). Mn(2+) serves as cofactor.

The protein localises to the cytoplasm. It carries out the reaction (2R,3S)-3-isopropylmalate + NAD(+) = 4-methyl-2-oxopentanoate + CO2 + NADH. The protein operates within amino-acid biosynthesis; L-leucine biosynthesis; L-leucine from 3-methyl-2-oxobutanoate: step 3/4. In terms of biological role, catalyzes the oxidation of 3-carboxy-2-hydroxy-4-methylpentanoate (3-isopropylmalate) to 3-carboxy-4-methyl-2-oxopentanoate. The product decarboxylates to 4-methyl-2 oxopentanoate. The polypeptide is 3-isopropylmalate dehydrogenase (LEU2) (Zygosaccharomyces rouxii (strain ATCC 2623 / CBS 732 / NBRC 1130 / NCYC 568 / NRRL Y-229)).